The chain runs to 330 residues: Cathepsin K (330 aa).

An N-terminal signal peptide occupies residues 1-16 (MWGLEVLLLLPMASFA). A propeptide spans 17 to 115 (LYPEEILDTQ…TLYIPDWESR (99 aa)) (activation peptide). Asparagine 104 carries N-linked (GlcNAc...) asparagine glycosylation. Cystine bridges form between cysteine 137/cysteine 178, cysteine 171/cysteine 211, and cysteine 270/cysteine 319. Residue cysteine 140 is part of the active site. Catalysis depends on residues histidine 277 and asparagine 297.

It belongs to the peptidase C1 family.

It localises to the lysosome. It is found in the secreted. The protein resides in the apical cell membrane. It carries out the reaction Broad proteolytic activity. With small-molecule substrates and inhibitors, the major determinant of specificity is P2, which is preferably Leu, Met &gt; Phe, and not Arg.. In terms of biological role, thiol protease involved in osteoclastic bone resorption and may participate partially in the disorder of bone remodeling. Displays potent endoprotease activity against fibrinogen at acid pH. May play an important role in extracellular matrix degradation. Involved in the release of thyroid hormone thyroxine (T4) by limited proteolysis of TG/thyroglobulin in the thyroid follicle lumen. The chain is Cathepsin K (CTSK) from Canis lupus familiaris (Dog).